The following is a 468-amino-acid chain: Chromosomal replication initiator protein DnaA (468 aa).

The domain I, interacts with DnaA modulators stretch occupies residues 1 to 84; that stretch reads MSSSLWLQCL…RFEVGSRPVA (84 aa). The interval 81 to 104 is disordered; that stretch reads RPVAAPKPAPTRTPADVAAESSAP. A domain II region spans residues 84–131; sequence AAPKPAPTRTPADVAAESSAPAQLQARKPVHKTWDDDAQAIADINHRS. Positions 132 to 348 are domain III, AAA+ region; it reads NVNPKHKFNN…GALNRVIANA (217 aa). ATP-binding residues include glycine 176, glycine 178, lysine 179, and threonine 180. The segment at 349-468 is domain IV, binds dsDNA; the sequence is NFTGRPITID…YSNLIRTLSS (120 aa).

It belongs to the DnaA family. Oligomerizes as a right-handed, spiral filament on DNA at oriC.

Its subcellular location is the cytoplasm. In terms of biological role, plays an essential role in the initiation and regulation of chromosomal replication. ATP-DnaA binds to the origin of replication (oriC) to initiate formation of the DNA replication initiation complex once per cell cycle. Binds the DnaA box (a 9 base pair repeat at the origin) and separates the double-stranded (ds)DNA. Forms a right-handed helical filament on oriC DNA; dsDNA binds to the exterior of the filament while single-stranded (ss)DNA is stabiized in the filament's interior. The ATP-DnaA-oriC complex binds and stabilizes one strand of the AT-rich DNA unwinding element (DUE), permitting loading of DNA polymerase. After initiation quickly degrades to an ADP-DnaA complex that is not apt for DNA replication. Binds acidic phospholipids. The chain is Chromosomal replication initiator protein DnaA from Vibrio campbellii (strain ATCC BAA-1116).